Reading from the N-terminus, the 527-residue chain is Ribosomal protein S6 kinase beta-1 (527 aa).

The disordered stretch occupies residues methionine 1–methionine 54. Residues phenylalanine 28 to leucine 32 carry the TOS motif motif. The span at isoleucine 30–glutamate 46 shows a compositional bias: acidic residues. A Protein kinase domain is found at phenylalanine 91–phenylalanine 352. ATP is bound by residues leucine 97–valine 105 and lysine 123. Aspartate 218 serves as the catalytic Proton acceptor. Residue threonine 252 is modified to Phosphothreonine; by PDPK1. The 71-residue stretch at arginine 353–lysine 423 folds into the AGC-kinase C-terminal domain. Serine 394 is subject to Phosphoserine. Threonine 412 is subject to Phosphothreonine; by MTOR, NEK6 and NEK7. Residues glutamate 424 to leucine 527 are autoinhibitory domain. Residues serine 434 and serine 441 each carry the phosphoserine modification. Phosphothreonine is present on threonine 444. Phosphoserine occurs at positions 447 and 452. Position 516 is an N6-acetyllysine (lysine 516).

Belongs to the protein kinase superfamily. AGC Ser/Thr protein kinase family. S6 kinase subfamily. Interacts with PPP1R9A/neurabin-1. Interacts with RPTOR. Interacts with IRS1. Interacts with EIF3B and EIF3C. Interacts with TRAF4. Interacts with POLDIP3. Interacts (via N-terminus) with IER5. Phosphorylation at Thr-412 is regulated by mTORC1. The phosphorylation at this site is maintained by an agonist-dependent autophosphorylation mechanism. Activated by phosphorylation at Thr-252 by PDPK1. Dephosphorylation by PPP1CC at Thr-412 in mitochondrion.

Its subcellular location is the cytoplasm. It localises to the synapse. It is found in the synaptosome. The protein resides in the mitochondrion outer membrane. The protein localises to the mitochondrion. The enzyme catalyses L-seryl-[protein] + ATP = O-phospho-L-seryl-[protein] + ADP + H(+). The catalysed reaction is L-threonyl-[protein] + ATP = O-phospho-L-threonyl-[protein] + ADP + H(+). Inactivated by binding to URI1. Activation requires multiple phosphorylation events on serine/threonine residues. Activation appears to be first mediated by phosphorylation of multiple sites in the autoinhibitory domain, which facilitates phosphorylation at Thr-412, disrupting the autoinhibitory mechanism and allowing phosphorylation of Thr-252 by PDPK1. The active conformation of the kinase is believed to be stabilized by a mechanism involving three conserved phosphorylation sites located in the kinase domain activation loop (Thr-252) and in the AGC-kinase C-terminal domain (Ser-394 in the middle of the tail/linker region and Thr-412 within a hydrophobic motif at its end). Activated by mTORC1; isoform Alpha I and isoform Alpha II are sensitive to rapamycin, which inhibits activating phosphorylation at Thr-412. Activated by PDPK1. Its function is as follows. Serine/threonine-protein kinase that acts downstream of mTOR signaling in response to growth factors and nutrients to promote cell proliferation, cell growth and cell cycle progression. Regulates protein synthesis through phosphorylation of EIF4B, RPS6 and EEF2K, and contributes to cell survival by repressing the pro-apoptotic function of BAD. Under conditions of nutrient depletion, the inactive form associates with the EIF3 translation initiation complex. Upon mitogenic stimulation, phosphorylation by the mechanistic target of rapamycin complex 1 (mTORC1) leads to dissociation from the EIF3 complex and activation. The active form then phosphorylates and activates several substrates in the pre-initiation complex, including the EIF2B complex and the cap-binding complex component EIF4B. Also controls translation initiation by phosphorylating a negative regulator of EIF4A, PDCD4, targeting it for ubiquitination and subsequent proteolysis. Promotes initiation of the pioneer round of protein synthesis by phosphorylating POLDIP3/SKAR. In response to IGF1, activates translation elongation by phosphorylating EEF2 kinase (EEF2K), which leads to its inhibition and thus activation of EEF2. Also plays a role in feedback regulation of mTORC2 by mTORC1 by phosphorylating MAPKAP1/SIN1, MTOR and RICTOR, resulting in the inhibition of mTORC2 and AKT1 signaling. Also involved in feedback regulation of mTORC1 and mTORC2 by phosphorylating DEPTOR. Mediates cell survival by phosphorylating the pro-apoptotic protein BAD and suppressing its pro-apoptotic function. Phosphorylates mitochondrial URI1 leading to dissociation of a URI1-PPP1CC complex. The free mitochondrial PPP1CC can then dephosphorylate RPS6KB1 at Thr-412, which is proposed to be a negative feedback mechanism for the RPS6KB1 anti-apoptotic function. Mediates TNF-alpha-induced insulin resistance by phosphorylating IRS1 at multiple serine residues, resulting in accelerated degradation of IRS1. In cells lacking functional TSC1-2 complex, constitutively phosphorylates and inhibits GSK3B. May be involved in cytoskeletal rearrangement through binding to neurabin. Phosphorylates and activates the pyrimidine biosynthesis enzyme CAD, downstream of MTOR. Following activation by mTORC1, phosphorylates EPRS and thereby plays a key role in fatty acid uptake by adipocytes and also most probably in interferon-gamma-induced translation inhibition. This chain is Ribosomal protein S6 kinase beta-1 (RPS6KB1), found in Bos taurus (Bovine).